Consider the following 21-residue polypeptide: Ferredoxin (21 aa).

The 4Fe-4S ferredoxin-type domain maps to 2 to 21 (KVKVDADACIGCGVCVELCP). The [4Fe-4S] cluster site is built by Cys10, Cys13, and Cys16.

As to quaternary structure, monomer. Requires [4Fe-4S] cluster as cofactor.

In terms of biological role, ferredoxins are iron-sulfur proteins that transfer electrons in a wide variety of metabolic reactions. The polypeptide is Ferredoxin (fdxA) (Pyrococcus woesei).